Reading from the N-terminus, the 237-residue chain is Small ribosomal subunit protein uS2 (237 aa).

Belongs to the universal ribosomal protein uS2 family.

The polypeptide is Small ribosomal subunit protein uS2 (Clostridioides difficile (strain 630) (Peptoclostridium difficile)).